The chain runs to 804 residues: Protein translocase subunit SecA (804 aa).

ATP contacts are provided by residues Gln100, Gly118–Thr122, and Asp508.

This sequence belongs to the SecA family. Monomer and homodimer. Part of the essential Sec protein translocation apparatus which comprises SecA, SecYEG and auxiliary proteins SecDF. Other proteins may also be involved.

It localises to the cell membrane. The protein resides in the cytoplasm. The catalysed reaction is ATP + H2O + cellular proteinSide 1 = ADP + phosphate + cellular proteinSide 2.. Its function is as follows. Part of the Sec protein translocase complex. Interacts with the SecYEG preprotein conducting channel. Has a central role in coupling the hydrolysis of ATP to the transfer of proteins into and across the cell membrane, serving as an ATP-driven molecular motor driving the stepwise translocation of polypeptide chains across the membrane. In Leuconostoc citreum (strain KM20), this protein is Protein translocase subunit SecA.